The following is a 202-amino-acid chain: Guanylate kinase (202 aa).

The Guanylate kinase-like domain occupies Gly-3–Arg-181. An ATP-binding site is contributed by Ala-10–Thr-17.

Belongs to the guanylate kinase family.

It is found in the cytoplasm. It carries out the reaction GMP + ATP = GDP + ADP. Functionally, essential for recycling GMP and indirectly, cGMP. The sequence is that of Guanylate kinase from Methylobacillus flagellatus (strain ATCC 51484 / DSM 6875 / VKM B-1610 / KT).